The sequence spans 201 residues: Probable thymidylate kinase (201 aa).

Residue 10 to 17 participates in ATP binding; that stretch reads GIDGSGKS.

Belongs to the thymidylate kinase family.

It carries out the reaction dTMP + ATP = dTDP + ADP. This chain is Probable thymidylate kinase, found in Methanococcoides burtonii (strain DSM 6242 / NBRC 107633 / OCM 468 / ACE-M).